Reading from the N-terminus, the 417-residue chain is D-amino acid dehydrogenase (417 aa).

3 to 17 contacts FAD; sequence AVVLGSGVVGLMSAW.

Belongs to the DadA oxidoreductase family. FAD serves as cofactor.

It carries out the reaction a D-alpha-amino acid + A + H2O = a 2-oxocarboxylate + AH2 + NH4(+). Functionally, oxidative deamination of D-amino acids. The chain is D-amino acid dehydrogenase from Vibrio vulnificus (strain CMCP6).